Consider the following 319-residue polypeptide: tRNA N6-adenosine threonylcarbamoyltransferase (319 aa).

The Fe cation site is built by H110 and H114. Substrate contacts are provided by residues 135-139, D168, G181, D185, and N277; that span reads VVSGG. Residue D301 participates in Fe cation binding.

This sequence belongs to the KAE1 / TsaD family. The cofactor is Fe(2+).

The protein localises to the cytoplasm. It catalyses the reaction L-threonylcarbamoyladenylate + adenosine(37) in tRNA = N(6)-L-threonylcarbamoyladenosine(37) in tRNA + AMP + H(+). Functionally, required for the formation of a threonylcarbamoyl group on adenosine at position 37 (t(6)A37) in tRNAs that read codons beginning with adenine. Is involved in the transfer of the threonylcarbamoyl moiety of threonylcarbamoyl-AMP (TC-AMP) to the N6 group of A37, together with TsaE and TsaB. TsaD likely plays a direct catalytic role in this reaction. The sequence is that of tRNA N6-adenosine threonylcarbamoyltransferase from Mycoplasma pneumoniae (strain ATCC 29342 / M129 / Subtype 1) (Mycoplasmoides pneumoniae).